The primary structure comprises 232 residues: Orotidine 5'-phosphate decarboxylase (232 aa).

Substrate is bound by residues aspartate 11, lysine 32, 59-68 (DLKLHDIPHT), threonine 116, arginine 178, glutamine 188, glycine 208, and arginine 209. Lysine 61 serves as the catalytic Proton donor.

This sequence belongs to the OMP decarboxylase family. Type 1 subfamily. In terms of assembly, homodimer.

It catalyses the reaction orotidine 5'-phosphate + H(+) = UMP + CO2. It functions in the pathway pyrimidine metabolism; UMP biosynthesis via de novo pathway; UMP from orotate: step 2/2. In terms of biological role, catalyzes the decarboxylation of orotidine 5'-monophosphate (OMP) to uridine 5'-monophosphate (UMP). This chain is Orotidine 5'-phosphate decarboxylase, found in Synechococcus sp. (strain JA-3-3Ab) (Cyanobacteria bacterium Yellowstone A-Prime).